The chain runs to 537 residues: Phosphoenolpyruvate carboxykinase (ATP) (537 aa).

Substrate-binding residues include arginine 61, tyrosine 194, and lysine 200. Residues lysine 200, histidine 219, and glycine 235–threonine 243 each bind ATP. Lysine 200 and histidine 219 together coordinate Mn(2+). Aspartate 256 lines the Mn(2+) pocket. Residues glutamate 284, arginine 322, and threonine 448 each coordinate ATP. Arginine 322 is a substrate binding site.

Belongs to the phosphoenolpyruvate carboxykinase (ATP) family. The cofactor is Mn(2+).

Its subcellular location is the cytoplasm. The enzyme catalyses oxaloacetate + ATP = phosphoenolpyruvate + ADP + CO2. It functions in the pathway carbohydrate biosynthesis; gluconeogenesis. Functionally, involved in the gluconeogenesis. Catalyzes the conversion of oxaloacetate (OAA) to phosphoenolpyruvate (PEP) through direct phosphoryl transfer between the nucleoside triphosphate and OAA. The chain is Phosphoenolpyruvate carboxykinase (ATP) from Bradyrhizobium sp. (strain ORS 278).